Here is a 493-residue protein sequence, read N- to C-terminus: MKRLRFNYLLIGLITVLLALALWPSIPWYGGSTDRIAQIKSRGELRISTINSPLTYYTVNQSPAGMDYELAKRFADYLGVRLVVTVRPNLADLFDDLADDKADILAAGLIYNRERLKRFRAGPSYYSVSQQLVYRIGTSRPKNLGDLKGRLTVASGSAYLSSLREIKDRQYPDLDWAVSTDRTPDGLLQAVADGKIDYTIADSVSIGLMQRIHPQLTVAFDITEEEAVTWYTQQEANDSLNAAMLDFFSKMSEEGVIARLDEKYLGHVGTFDYVDTRTFLRSIDETLPDIRRLFEKYAKKIDWRLLAAISYQESHWDPLATSPTGVRGMMMLTRSTADSLNVSDRTDAEQSIRGGSEYMTHMMEKVPSGVPEDERIWFALAAYNMGYAHMLDARKLTEKQKGDPNSWADVKVRLPMLSQKRYYSQTTYGYARGHEAYAYVENIRKYQLSLVGYLQDRERKLAQKMAAEAELRQAYPAVEPDAALNPVSALPLP.

Residues 1–21 (MKRLRFNYLLIGLITVLLALA) form the signal peptide. A non-LT domain region spans residues 22–268 (LWPSIPWYGG…RLDEKYLGHV (247 aa)). The LT domain stretch occupies residues 269–493 (GTFDYVDTRT…LNPVSALPLP (225 aa)). E313 is an active-site residue.

The protein in the N-terminal section; belongs to the bacterial solute-binding protein 3 family. In the C-terminal section; belongs to the transglycosylase Slt family.

It localises to the cell outer membrane. The catalysed reaction is Exolytic cleavage of the (1-&gt;4)-beta-glycosidic linkage between N-acetylmuramic acid (MurNAc) and N-acetylglucosamine (GlcNAc) residues in peptidoglycan, from either the reducing or the non-reducing ends of the peptidoglycan chains, with concomitant formation of a 1,6-anhydrobond in the MurNAc residue.. Its function is as follows. Murein-degrading enzyme that degrades murein glycan strands and insoluble, high-molecular weight murein sacculi, with the concomitant formation of a 1,6-anhydromuramoyl product. Lytic transglycosylases (LTs) play an integral role in the metabolism of the peptidoglycan (PG) sacculus. Their lytic action creates space within the PG sacculus to allow for its expansion as well as for the insertion of various structures such as secretion systems and flagella. This Erwinia tasmaniensis (strain DSM 17950 / CFBP 7177 / CIP 109463 / NCPPB 4357 / Et1/99) protein is Membrane-bound lytic murein transglycosylase F.